Consider the following 457-residue polypeptide: Siroheme synthase (457 aa).

Positions 1–204 (MDHLPIFCQL…ADEKAVNATT (204 aa)) are precorrin-2 dehydrogenase /sirohydrochlorin ferrochelatase. Residues 22-23 (DV) and 43-44 (LT) each bind NAD(+). S128 is modified (phosphoserine). Residues 216 to 457 (GEVVLVGAGP…RDKLNWFSNY (242 aa)) form a uroporphyrinogen-III C-methyltransferase region. P225 is a binding site for S-adenosyl-L-methionine. The Proton acceptor role is filled by D248. The active-site Proton donor is the K270. Residues 301-303 (GGD), I306, 331-332 (TA), M382, and G411 each bind S-adenosyl-L-methionine.

In the N-terminal section; belongs to the precorrin-2 dehydrogenase / sirohydrochlorin ferrochelatase family. It in the C-terminal section; belongs to the precorrin methyltransferase family.

It carries out the reaction uroporphyrinogen III + 2 S-adenosyl-L-methionine = precorrin-2 + 2 S-adenosyl-L-homocysteine + H(+). It catalyses the reaction precorrin-2 + NAD(+) = sirohydrochlorin + NADH + 2 H(+). The catalysed reaction is siroheme + 2 H(+) = sirohydrochlorin + Fe(2+). It functions in the pathway cofactor biosynthesis; adenosylcobalamin biosynthesis; precorrin-2 from uroporphyrinogen III: step 1/1. The protein operates within cofactor biosynthesis; adenosylcobalamin biosynthesis; sirohydrochlorin from precorrin-2: step 1/1. It participates in porphyrin-containing compound metabolism; siroheme biosynthesis; precorrin-2 from uroporphyrinogen III: step 1/1. Its pathway is porphyrin-containing compound metabolism; siroheme biosynthesis; siroheme from sirohydrochlorin: step 1/1. It functions in the pathway porphyrin-containing compound metabolism; siroheme biosynthesis; sirohydrochlorin from precorrin-2: step 1/1. Functionally, multifunctional enzyme that catalyzes the SAM-dependent methylations of uroporphyrinogen III at position C-2 and C-7 to form precorrin-2 via precorrin-1. Then it catalyzes the NAD-dependent ring dehydrogenation of precorrin-2 to yield sirohydrochlorin. Finally, it catalyzes the ferrochelation of sirohydrochlorin to yield siroheme. In Salmonella gallinarum (strain 287/91 / NCTC 13346), this protein is Siroheme synthase.